The following is a 535-amino-acid chain: MATLPILDLWSTNKALVSLTISASLLLVSLLVSLFQVGRRERGLPPGPPTRLVLGNEHEIPKADSHFLMSKWAKQYGGIFSLKRFRNTTIVLTDWKIMKELVDKKSTNFSHRPPSKVADLITRGNHILMMQYGETWRTMRKLIHQYLMESQCEKEHWKVQEAEAAQMLHDFLVDPENHMKHPKRYSNSITMSLVFGIRAKSVNDEYMTRLYSLMEKWSLVLETGATPPVDSWPLLQWIPERFMGYWRRRATEVGDLMTGLYTEVLHVIENRRKAGIYKDSLMDRVLDKKDKYRFDEHQLAFLGGTLMEGGSDTSSSLILAIVQAMTQYPEVQKKAHAEIDSVIGTDRSPAWSDFRKLPYINMMIKEAHRWRPVLPLGVVHGLATDDSYNGMHLPKHSTVILNVWGMHMDPDRFENPDAFIPERYANFPELAPHYAALADGAARDHFGYGAGRRICPGIHLAERNLFIAVAKLLWAFEFKNNPAGKNDASAETGSSQGFMHCVKDYDAIVTVRGEERRQTILRELEQAQTVFAKYD.

Residue Cys-455 coordinates heme.

The protein belongs to the cytochrome P450 family. Requires heme as cofactor.

It catalyses the reaction 3-methylcatechol + AH2 + O2 = 3-methylbenzene-1,2,4-triol + A + H2O. It participates in secondary metabolite biosynthesis. In terms of biological role, cytochrome P450 monooxygenase; part of the gene cluster that mediates the biosynthesis of terreic acid, a quinone epoxide inhibitor of Bruton's tyrosine kinase. The first step of the pathway is the synthesis of 6-methylsalicylic acid (6-MSA) by the 6-methylsalicylic acid synthase atX. In the biosynthesis of 6-MSA, atX utilizes one acetyl-CoA and three malonyl-CoAs as its substrates and catalyzes a series of programmed reactions including Claisen condensation, reduction, aldol cyclization, and the hydrolytic cleavage that yields 6-MSA. The 6-methylsalicylate 1-monooxygenase atA then catalyzes the decarboxylative hydroxylation of 6-MSA to 3-methylcatechol. The next step is the conversion of 3-methylcatechol to 3-methyl-1,2,4-benzenetriol by cytochrome P450 monooxygenase atE, which is enhanced by cytochrome P450 monooxygenase atG. Then, the epoxidase atD catalyzes the epoxidation and hydroxyl oxidation of 3-methyl-1,2,4-benzenetriol to terremutin. Lastly, GMC oxidoreductase atC oxidizes terremutin to terreic acid. The sequence is that of Cytochrome P450 monooxygenase atE from Aspergillus terreus (strain NIH 2624 / FGSC A1156).